The sequence spans 131 residues: Large ribosomal subunit protein bL19 (131 aa).

Belongs to the bacterial ribosomal protein bL19 family.

Its function is as follows. This protein is located at the 30S-50S ribosomal subunit interface and may play a role in the structure and function of the aminoacyl-tRNA binding site. The sequence is that of Large ribosomal subunit protein bL19 from Rhodopseudomonas palustris (strain HaA2).